Consider the following 358-residue polypeptide: Homoserine O-acetyltransferase (358 aa).

In terms of domain architecture, AB hydrolase-1 spans 41–343; the sequence is NAVLICHALT…DYGHDAFLVD (303 aa). The active-site Nucleophile is Ser-143. Arg-212 is a substrate binding site. Residues Asp-304 and His-337 contribute to the active site. Asp-338 serves as a coordination point for substrate.

It belongs to the AB hydrolase superfamily. MetX family. As to quaternary structure, homodimer.

The protein localises to the cytoplasm. It catalyses the reaction L-homoserine + acetyl-CoA = O-acetyl-L-homoserine + CoA. It participates in amino-acid biosynthesis; L-methionine biosynthesis via de novo pathway; O-acetyl-L-homoserine from L-homoserine: step 1/1. In terms of biological role, transfers an acetyl group from acetyl-CoA to L-homoserine, forming acetyl-L-homoserine. In Haemophilus influenzae (strain 86-028NP), this protein is Homoserine O-acetyltransferase.